Consider the following 62-residue polypeptide: uncharacterized protein (62 aa).

The next 2 helical transmembrane spans lie at 9 to 29 (HNEL…ALIG) and 42 to 62 (AAVV…LQLL).

The protein resides in the membrane. This is an uncharacterized protein from Saccharomyces cerevisiae (strain ATCC 204508 / S288c) (Baker's yeast).